Here is a 310-residue protein sequence, read N- to C-terminus: Ribosomal RNA small subunit methyltransferase H (310 aa).

Residues 32 to 34, Asp-52, Phe-79, Asp-100, and Gln-107 contribute to the S-adenosyl-L-methionine site; that span reads GGH.

It belongs to the methyltransferase superfamily. RsmH family.

The protein localises to the cytoplasm. The enzyme catalyses cytidine(1402) in 16S rRNA + S-adenosyl-L-methionine = N(4)-methylcytidine(1402) in 16S rRNA + S-adenosyl-L-homocysteine + H(+). Its function is as follows. Specifically methylates the N4 position of cytidine in position 1402 (C1402) of 16S rRNA. This is Ribosomal RNA small subunit methyltransferase H from Bacillus mycoides (strain KBAB4) (Bacillus weihenstephanensis).